Consider the following 241-residue polypeptide: Probable transcriptional regulatory protein LHK_02347 (241 aa).

The protein belongs to the TACO1 family.

It localises to the cytoplasm. This Laribacter hongkongensis (strain HLHK9) protein is Probable transcriptional regulatory protein LHK_02347.